We begin with the raw amino-acid sequence, 559 residues long: Potassium-transporting ATPase potassium-binding subunit (559 aa).

The next 13 membrane-spanning stretches (helical) occupy residues 5-25, 27-47, 63-83, 132-152, 170-190, 253-273, 283-303, 327-347, 356-376, 379-399, 416-436, 484-504, and 524-544; these read GFLL…PLGS, LARL…RILW, LLAL…LLFW, GLTV…FALI, LVRI…LFFI, LAQM…FGEA, LLWA…WAEV, FGVL…CGAV, ALGG…FGGV, GLYG…LMIG, MTAL…ALAM, LLAF…MAIA, and GALF…LTFI.

Belongs to the KdpA family. The system is composed of three essential subunits: KdpA, KdpB and KdpC.

Its subcellular location is the cell inner membrane. Its function is as follows. Part of the high-affinity ATP-driven potassium transport (or Kdp) system, which catalyzes the hydrolysis of ATP coupled with the electrogenic transport of potassium into the cytoplasm. This subunit binds the periplasmic potassium ions and delivers the ions to the membrane domain of KdpB through an intramembrane tunnel. This chain is Potassium-transporting ATPase potassium-binding subunit, found in Salmonella typhimurium (strain LT2 / SGSC1412 / ATCC 700720).